Reading from the N-terminus, the 95-residue chain is Ribonuclease kappa-B (95 aa).

A run of 2 helical transmembrane segments spans residues 12-32 (GLII…FFYI) and 68-88 (CWIA…QFYV).

Belongs to the RNase K family.

It localises to the membrane. Its activity is regulated as follows. Inhibited by Zn(2+) and Hg(2+), while it is unaffected by Ca(2+). Endoribonuclease which displays activity against poly(C) and poly(U) synthetic substrates, as well as rRNA. This Ceratitis capitata (Mediterranean fruit fly) protein is Ribonuclease kappa-B.